A 186-amino-acid polypeptide reads, in one-letter code: Ribosome-recycling factor (186 aa).

Composition is skewed to basic and acidic residues over residues Arg134–Glu169 and Ala176–Asp186. Residues Arg134–Asp186 form a disordered region.

This sequence belongs to the RRF family.

Its subcellular location is the cytoplasm. Functionally, responsible for the release of ribosomes from messenger RNA at the termination of protein biosynthesis. May increase the efficiency of translation by recycling ribosomes from one round of translation to another. In Rhodopirellula baltica (strain DSM 10527 / NCIMB 13988 / SH1), this protein is Ribosome-recycling factor.